A 279-amino-acid chain; its full sequence is Acyl-[acyl-carrier-protein]--UDP-N-acetylglucosamine O-acyltransferase (279 aa).

The segment at Ala260–Ser279 is disordered.

This sequence belongs to the transferase hexapeptide repeat family. LpxA subfamily. In terms of assembly, homotrimer.

The protein localises to the cytoplasm. It carries out the reaction a (3R)-hydroxyacyl-[ACP] + UDP-N-acetyl-alpha-D-glucosamine = a UDP-3-O-[(3R)-3-hydroxyacyl]-N-acetyl-alpha-D-glucosamine + holo-[ACP]. The protein operates within glycolipid biosynthesis; lipid IV(A) biosynthesis; lipid IV(A) from (3R)-3-hydroxytetradecanoyl-[acyl-carrier-protein] and UDP-N-acetyl-alpha-D-glucosamine: step 1/6. In terms of biological role, involved in the biosynthesis of lipid A, a phosphorylated glycolipid that anchors the lipopolysaccharide to the outer membrane of the cell. The sequence is that of Acyl-[acyl-carrier-protein]--UDP-N-acetylglucosamine O-acyltransferase from Chlamydia abortus (strain DSM 27085 / S26/3) (Chlamydophila abortus).